A 347-amino-acid polypeptide reads, in one-letter code: Holliday junction branch migration complex subunit RuvB (347 aa).

The large ATPase domain (RuvB-L) stretch occupies residues 1–183 (MTPPSRIVTP…FGIPIRLNFY (183 aa)). ATP is bound by residues Leu-22, Arg-23, Gly-64, Lys-67, Thr-68, Thr-69, 130–132 (EDF), Arg-173, Tyr-183, and Arg-220. Thr-68 contributes to the Mg(2+) binding site. Residues 184–254 (TVEELEGIVS…IADHALSALE (71 aa)) form a small ATPAse domain (RuvB-S) region. The interval 257 to 347 (AAGLDAMDRR…QFGLFGGDEE (91 aa)) is head domain (RuvB-H). Residues Arg-293, Arg-312, and Arg-317 each contribute to the DNA site.

It belongs to the RuvB family. In terms of assembly, homohexamer. Forms an RuvA(8)-RuvB(12)-Holliday junction (HJ) complex. HJ DNA is sandwiched between 2 RuvA tetramers; dsDNA enters through RuvA and exits via RuvB. An RuvB hexamer assembles on each DNA strand where it exits the tetramer. Each RuvB hexamer is contacted by two RuvA subunits (via domain III) on 2 adjacent RuvB subunits; this complex drives branch migration. In the full resolvosome a probable DNA-RuvA(4)-RuvB(12)-RuvC(2) complex forms which resolves the HJ.

The protein resides in the cytoplasm. It catalyses the reaction ATP + H2O = ADP + phosphate + H(+). In terms of biological role, the RuvA-RuvB-RuvC complex processes Holliday junction (HJ) DNA during genetic recombination and DNA repair, while the RuvA-RuvB complex plays an important role in the rescue of blocked DNA replication forks via replication fork reversal (RFR). RuvA specifically binds to HJ cruciform DNA, conferring on it an open structure. The RuvB hexamer acts as an ATP-dependent pump, pulling dsDNA into and through the RuvAB complex. RuvB forms 2 homohexamers on either side of HJ DNA bound by 1 or 2 RuvA tetramers; 4 subunits per hexamer contact DNA at a time. Coordinated motions by a converter formed by DNA-disengaged RuvB subunits stimulates ATP hydrolysis and nucleotide exchange. Immobilization of the converter enables RuvB to convert the ATP-contained energy into a lever motion, pulling 2 nucleotides of DNA out of the RuvA tetramer per ATP hydrolyzed, thus driving DNA branch migration. The RuvB motors rotate together with the DNA substrate, which together with the progressing nucleotide cycle form the mechanistic basis for DNA recombination by continuous HJ branch migration. Branch migration allows RuvC to scan DNA until it finds its consensus sequence, where it cleaves and resolves cruciform DNA. This Rhodopseudomonas palustris (strain BisA53) protein is Holliday junction branch migration complex subunit RuvB.